A 206-amino-acid polypeptide reads, in one-letter code: Ribosomal RNA large subunit methyltransferase E (206 aa).

Positions 60, 62, 80, 96, and 121 each coordinate S-adenosyl-L-methionine. Residue lysine 161 is the Proton acceptor of the active site.

This sequence belongs to the class I-like SAM-binding methyltransferase superfamily. RNA methyltransferase RlmE family.

Its subcellular location is the cytoplasm. The enzyme catalyses uridine(2552) in 23S rRNA + S-adenosyl-L-methionine = 2'-O-methyluridine(2552) in 23S rRNA + S-adenosyl-L-homocysteine + H(+). In terms of biological role, specifically methylates the uridine in position 2552 of 23S rRNA at the 2'-O position of the ribose in the fully assembled 50S ribosomal subunit. The chain is Ribosomal RNA large subunit methyltransferase E from Saccharophagus degradans (strain 2-40 / ATCC 43961 / DSM 17024).